The primary structure comprises 413 residues: Transcription factor E2F4 (413 aa).

The interval 1–20 (MAEAGPQAPPPPGTPSRHEK) is disordered. The residue at position 2 (A2) is an N-acetylalanine. Residues 16–85 (SRHEKSLGLL…KNSIQWKGVG (70 aa)) mediate DNA binding. Positions 43–65 (LKLAADTLAVRQKRRIYDITNVL) are leucine-zipper. The DEF box signature appears at 48-85 (DTLAVRQKRRIYDITNVLEGIGLIEKKSKNSIQWKGVG). Residues 86 to 181 (PGCNTREIAD…GLNGQKKYQI (96 aa)) form a dimerization region. Positions 211–340 (PPEDLLQSPS…PSTSFEPIKA (130 aa)) are disordered. Polar residues-rich tracts occupy residues 234–249 (AQSQ…QLTP) and 293–306 (TLDT…ALLD). The span at 307-327 (SSSSSSSSSSSSSNSNSSSSS) shows a compositional bias: low complexity. Residues 337 to 413 (PIKADPTGVL…DLFDVPVLNL (77 aa)) form a transactivation region. S384 bears the Phosphoserine mark. Residues 389-392 (DHDY) carry the HCFC1-binding-motif (HBM) motif. The interval 390-407 (HDYIYNLDESEGVCDLFD) is interaction with RBL1 and RBL2.

This sequence belongs to the E2F/DP family. Component of the DRTF1/E2F transcription factor complex. Binds cooperatively with TFDP1/Dp-1 to E2F sites. The E2F4/TFDP1 dimer interacts preferentially with pocket protein RBL1, which inhibits the E2F transactivation domain. Lower affinity interaction has been found with retinoblastoma protein RB1. Interacts with TRRAP, which probably mediates its interaction with histone acetyltransferase complexes, leading to transcription activation. Interacts with HCFC1. Component of the DREAM complex (also named LINC complex) at least composed of E2F4, E2F5, LIN9, LIN37, LIN52, LIN54, MYBL1, MYBL2, RBL1, RBL2, RBBP4, TFDP1 and TFDP2. The complex exists in quiescent cells where it represses cell cycle-dependent genes. It dissociates in S phase when LIN9, LIN37, LIN52 and LIN54 form a subcomplex that binds to MYBL2. Interacts with PML (isoform PML-1, isoform PML-2, isoform PML-3, isoform PML-4 and isoform PML-5). Interacts with CEBPA (when phosphorylated). Post-translationally, differentially phosphorylated in vivo. In terms of tissue distribution, found in all tissue examined including heart, brain, placenta, lung, liver, skeletal muscle, kidney and pancreas.

The protein resides in the nucleus. Transcription activator that binds DNA cooperatively with DP proteins through the E2 recognition site, 5'-TTTC[CG]CGC-3' found in the promoter region of a number of genes whose products are involved in cell cycle regulation or in DNA replication. The DRTF1/E2F complex functions in the control of cell-cycle progression from G1 to S phase. E2F4 binds with high affinity to RBL1 and RBL2. In some instances can also bind RB1. Specifically required for multiciliate cell differentiation: together with MCIDAS and E2F5, binds and activate genes required for centriole biogenesis. The sequence is that of Transcription factor E2F4 (E2F4) from Homo sapiens (Human).